The sequence spans 86 residues: Defensin-like protein a (86 aa).

An N-terminal signal peptide occupies residues 1 to 23 (MRCSVLFVVSYVIMSLLISHVQG). Disulfide bonds link cysteine 33/cysteine 81, cysteine 43/cysteine 67, cysteine 51/cysteine 76, and cysteine 65/cysteine 78.

The protein belongs to the DEFL family. Expressed specifically in anthers.

The protein resides in the secreted. Involved in self-incompatibility. This chain is Defensin-like protein a (SCRa), found in Arabidopsis lyrata (Lyre-leaved rock-cress).